Reading from the N-terminus, the 212-residue chain is Ropporin-1 (212 aa).

The region spanning 12–43 (PELPELLKQFTKAAIRTQPPDLIQWAAEYFGA) is the RIIa domain. Residue Ser-56 is modified to Phosphoserine. The tract at residues 209–212 (VRLE) is interaction with RHPN1.

It belongs to the ropporin family. As to quaternary structure, homodimer. Interacts with AKAP3. May interact with SPA17. Interacts with RHPN1. Interacts with FSCB; the interaction increases upon spermatozoa capacitation conditions. Interacts with CFAP61. Post-translationally, sumoylated, sumoylation decreases upon spermatozoa capacitation conditions.

It is found in the cell projection. It localises to the cilium. Its subcellular location is the flagellum. Important for male fertility. With ROPN1L, involved in fibrous sheath integrity and sperm motility, plays a role in PKA-dependent signaling processes required for spermatozoa capacitation. This chain is Ropporin-1 (Ropn1), found in Rattus norvegicus (Rat).